A 108-amino-acid polypeptide reads, in one-letter code: Class I hydrophobin hgfII (108 aa).

An N-terminal signal peptide occupies residues 1–19 (MFSRIAAVSFLALPLLAAA). Disulfide bonds link cysteine 28–cysteine 89, cysteine 35–cysteine 83, cysteine 36–cysteine 69, and cysteine 90–cysteine 103. Asparagine 92 carries an N-linked (GlcNAc...) asparagine glycan.

This sequence belongs to the fungal hydrophobin family. Self-assembles to form functional amyloid fibrils called rodlets with a diameter of 15-30 nm. Self-assembly into fibrillar rodlets occurs spontaneously at hydrophobic:hydrophilic interfaces and the rodlets further associate laterally to form amphipathic monolayers. As to expression, highky expressed in hyphae cultured in liquid medium.

Its subcellular location is the secreted. The protein resides in the cell wall. Aerial growth, conidiation, and dispersal of filamentous fungi in the environment rely upon a capability of their secreting small amphipathic proteins called hydrophobins (HPBs) with low sequence identity. Class I can self-assemble into an outermost layer of rodlet bundles on aerial cell surfaces, conferring cellular hydrophobicity that supports fungal growth, development and dispersal; whereas Class II form highly ordered films at water-air interfaces through intermolecular interactions but contribute nothing to the rodlet structure. HgfII is a class I hydrophobin that is involved in cell surface hydrophobicity and might play a key role during the growth and development of hyphae cultured in liquid medium. This Grifola frondosa (Maitake) protein is Class I hydrophobin hgfII.